A 257-amino-acid polypeptide reads, in one-letter code: 7-carboxy-7-deazaguanine synthase (257 aa).

Substrate-binding positions include 29–31 (LQG) and Arg44. Residues 35–253 (LAGTPSVFVR…PRLHVALWND (219 aa)) form the Radical SAM core domain. Cys48, Cys52, and Cys55 together coordinate [4Fe-4S] cluster. Ser57 is a Mg(2+) binding site. Thr90 lines the substrate pocket. Gly92 serves as a coordination point for S-adenosyl-L-methionine. The tract at residues 133–153 (VSPKLASSTPTAETDPKGDGE) is disordered.

The protein belongs to the radical SAM superfamily. 7-carboxy-7-deazaguanine synthase family. In terms of assembly, homodimer. [4Fe-4S] cluster is required as a cofactor. It depends on S-adenosyl-L-methionine as a cofactor. Requires Mg(2+) as cofactor.

The catalysed reaction is 6-carboxy-5,6,7,8-tetrahydropterin + H(+) = 7-carboxy-7-deazaguanine + NH4(+). Its pathway is purine metabolism; 7-cyano-7-deazaguanine biosynthesis. In terms of biological role, catalyzes the complex heterocyclic radical-mediated conversion of 6-carboxy-5,6,7,8-tetrahydropterin (CPH4) to 7-carboxy-7-deazaguanine (CDG), a step common to the biosynthetic pathways of all 7-deazapurine-containing compounds. The chain is 7-carboxy-7-deazaguanine synthase from Halobacterium salinarum (strain ATCC 29341 / DSM 671 / R1).